A 525-amino-acid polypeptide reads, in one-letter code: GMP synthase [glutamine-hydrolyzing] (525 aa).

One can recognise a Glutamine amidotransferase type-1 domain in the interval 8–207 (KILILDFGSQ…ALDICQCEAN (200 aa)). The active-site Nucleophile is the cysteine 85. Active-site residues include histidine 181 and glutamate 183. One can recognise a GMPS ATP-PPase domain in the interval 208–400 (WKPSSIIEDA…LGLPYNMLYR (193 aa)). 235 to 241 (SGGVDSS) serves as a coordination point for ATP.

In terms of assembly, homodimer.

The enzyme catalyses XMP + L-glutamine + ATP + H2O = GMP + L-glutamate + AMP + diphosphate + 2 H(+). It functions in the pathway purine metabolism; GMP biosynthesis; GMP from XMP (L-Gln route): step 1/1. Catalyzes the synthesis of GMP from XMP. The sequence is that of GMP synthase [glutamine-hydrolyzing] from Shewanella loihica (strain ATCC BAA-1088 / PV-4).